The following is a 173-amino-acid chain: T-cell receptor beta-1 chain C region (173 aa).

A c region region spans residues 1–146; the sequence is EDLRNVTPPK…GVLSATILYE (146 aa). A disulfide bridge connects residues cysteine 31 and cysteine 71. N-linked (GlcNAc...) asparagine glycosylation is found at asparagine 67 and asparagine 116. Residues 146 to 167 traverse the membrane as a helical segment; sequence EILLGKATLYAVLVSTLVVMAM. The Cytoplasmic segment spans residues 168 to 173; the sequence is VKRKNS.

The protein resides in the membrane. This Mus musculus (Mouse) protein is T-cell receptor beta-1 chain C region.